A 671-amino-acid chain; its full sequence is RNA polymerase sigma factor RpoD (671 aa).

Disordered regions lie at residues 1 to 45 (MKKK…SKIK) and 229 to 260 (DDDE…VSEK). Residues 251–260 (EERKKVVSEK) show a composition bias toward basic and acidic residues. Residues 436-506 (MAKSNLRLVV…SRAIADQART (71 aa)) are sigma-70 factor domain-2. An Interaction with polymerase core subunit RpoC motif is present at residues 460–463 (DLIQ). A sigma-70 factor domain-3 region spans residues 515 to 591 (DTINRINKVM…DKNIVSSIDH (77 aa)). The interval 604–658 (VLDQLNEREKAVIRMRFGLLDDESDRTLEEIGKELNVTRERVRQIESSAIKKLRS) is sigma-70 factor domain-4. A DNA-binding region (H-T-H motif) is located at residues 631–650 (LEEIGKELNVTRERVRQIES).

This sequence belongs to the sigma-70 factor family. RpoD/SigA subfamily. Interacts transiently with the RNA polymerase catalytic core.

It is found in the cytoplasm. Sigma factors are initiation factors that promote the attachment of RNA polymerase to specific initiation sites and are then released. This sigma factor is the primary sigma factor during exponential growth. This Helicobacter pylori (strain ATCC 700392 / 26695) (Campylobacter pylori) protein is RNA polymerase sigma factor RpoD.